Here is a 600-residue protein sequence, read N- to C-terminus: MVLILGRRLNREDLGVRDSPATKRKVFEMDPKSLTGHEYFDFSSGSSHAENILQIFNEFRDSRLFTDVIICVEGKEFPCHRAVLSACSSYFRAMFCNDHRESREMLVEINGILAEAMECFLQYVYTGKVKITTENVQYLFETSSLFQISVLRDACAKFLEEQLDPCNCLGIQRFADTHSLKTLFTKCKTFALQTFEDVSQHEEFLELDKDELIDYICSDELVIGKEEMVFEAVMRWVYRAVDLRRPLLHELLTHVRLPLLHPNYFVQTVEVDQLIQNSPECYQLLHEARRYHILGNEMMSPRTRPRRSTGYSEVIVVVGGCERVGGFNLPYTECYDPVTGEWKSLAKLPEFTKSEYAVCALRNDILVSGGRINSRDVWIYNSQLNIWIRVASLNKGRWRHKMAVLLGKVYVVGGYDGQNRLSSVECYDSFSNRWTEVAPLKEAVSSPAVTSCIGKLFVIGGGPDDNTCSDKVQSYDPETNSWLLRAAIPIAKRCITAVSLNNLIYVAGGLTKAVYCYDPVEDYWMHVQNTFSRQENCGMSVCNGKIYILGGRRENGEATDTILCYDPATSIITGVAAMPRPVSYHGCVTIHRYNEKCFKL.

Residues 66–133 form the BTB domain; that stretch reads TDVIICVEGK…VYTGKVKITT (68 aa). The BACK domain occupies 168 to 270; it reads CLGIQRFADT…HPNYFVQTVE (103 aa). 6 Kelch repeats span residues 314 to 363, 365 to 407, 408 to 454, 456 to 502, 504 to 544, and 546 to 592; these read VIVV…ALRN, ILVS…VLLG, KVYV…SCIG, LFVI…SLNN, IYVA…VCNG, and IYIL…TIHR.

In terms of assembly, forms homodimers. Interacts with GRIK2. Component of the BCR(KLHL24) E3 ubiquitin ligase complex, composed of CUL3, RBX1 and KLHL24. Interacts with CUL3. Interacts with KRT14. Post-translationally, autoubiquitinated. Autoubiquitination leads to proteasomal degradation and is necessary to control KLHL24 levels. Expressed in the brain.

Its subcellular location is the perikaryon. It localises to the cell projection. The protein localises to the axon. It is found in the cytoplasm. The protein resides in the cell junction. Its subcellular location is the desmosome. It localises to the adherens junction. Functionally, controls KRT14 levels during keratinocytes differentiation. As part of the BCR(KLHL24) E3 ubiquitin ligase complex, mediates ubiquitination of KRT14. Specifically reduces kainate receptor-mediated currents in hippocampal neurons, most probably by modulating channel properties. Has a crucial role in cardiac development and function. This Mus musculus (Mouse) protein is Kelch-like protein 24 (Klhl24).